The following is a 526-amino-acid chain: Light-independent protochlorophyllide reductase subunit B (526 aa).

A [4Fe-4S] cluster-binding site is contributed by Asp-36. Residue Asp-290 is the Proton donor of the active site. Residue 425-426 (GL) participates in substrate binding.

Belongs to the ChlB/BchB/BchZ family. In terms of assembly, protochlorophyllide reductase is composed of three subunits; ChlL, ChlN and ChlB. Forms a heterotetramer of two ChlB and two ChlN subunits. The cofactor is [4Fe-4S] cluster.

The catalysed reaction is chlorophyllide a + oxidized 2[4Fe-4S]-[ferredoxin] + 2 ADP + 2 phosphate = protochlorophyllide a + reduced 2[4Fe-4S]-[ferredoxin] + 2 ATP + 2 H2O. The protein operates within porphyrin-containing compound metabolism; chlorophyll biosynthesis (light-independent). Functionally, component of the dark-operative protochlorophyllide reductase (DPOR) that uses Mg-ATP and reduced ferredoxin to reduce ring D of protochlorophyllide (Pchlide) to form chlorophyllide a (Chlide). This reaction is light-independent. The NB-protein (ChlN-ChlB) is the catalytic component of the complex. The sequence is that of Light-independent protochlorophyllide reductase subunit B from Prochlorococcus marinus (strain MIT 9515).